Here is a 326-residue protein sequence, read N- to C-terminus: Zinc-dependent endopolyphosphatase (326 aa).

The Cytoplasmic segment spans residues 1–9 (MEDKRKRRA). A helical membrane pass occupies residues 10–30 (ATLSTALILFVACCVYTLYIF). Over 31-326 (KFDNPRLSPP…DYELIQVQCS (296 aa)) the chain is Vacuolar. Asn-90 and Asn-241 each carry an N-linked (GlcNAc...) asparagine glycan.

This sequence belongs to the metallophosphoesterase superfamily. Interacts with PPN1. The cofactor is Zn(2+). Co(2+) serves as cofactor. Mg(2+) is required as a cofactor.

It localises to the vacuole membrane. It catalyses the reaction [phosphate](n+1) + n H2O = (n+1) phosphate + n H(+). With respect to regulation, not sensitive to heparin inhibition. In terms of biological role, catalyzes the hydrolysis of inorganic polyphosphate (polyP) chains of many hundreds of phosphate residues into shorter lengths. Exclusively shows endopolyphosphatase activity, cleaving inside the polyP chain. Together with PPN1, responsible for a substantial fraction of polyphosphatase activity that is necessary to mobilize polyP stores in response to phosphate scarcity. This Saccharomyces cerevisiae (strain ATCC 204508 / S288c) (Baker's yeast) protein is Zinc-dependent endopolyphosphatase.